The following is a 435-amino-acid chain: Uracil permease (435 aa).

The next 12 helical transmembrane spans lie at 17–37, 42–62, 67–87, 91–111, 122–142, 161–181, 191–213, 234–254, 311–331, 336–356, 376–396, and 399–419; these read FSWVSFSLQHLFAMFGSTILV, GMSPAVALVTSGIGTLAYLLI, IPAYLGSSFAFISPIILVKAT, GAAMVGAFLAGLVYGLIALLI, ILPPVVVGPVIIVIGLGLAST, LKHFSVAGVTLAITIICAIFL, LIGIIGGYLFALTQGIVNFQPVL, VTLGIAAAMVPVAFVTMSEHI, VFSVFVIGGAAVIALCFGFIG, LISSVPSAVMGGVSFLLFGII, NLIITSVILVIGVGGAFIQVS, and GFQVSGMALAAIVGVILNLIL.

This sequence belongs to the nucleobase:cation symporter-2 (NCS2) (TC 2.A.40) family.

It is found in the cell membrane. In terms of biological role, transport of uracil in the cell. The polypeptide is Uracil permease (pyrP) (Bacillus subtilis (strain 168)).